The sequence spans 40 residues: Alpha-conotoxin-like Lp1.6b (40 aa).

A propeptide spanning residues 1-23 (VVLGPASDGRNAAANNKASDLIR) is cleaved from the precursor. Gln-24 carries the post-translational modification Pyrrolidone carboxylic acid. Disulfide bonds link Cys-26–Cys-32 and Cys-27–Cys-39.

The protein belongs to the conotoxin A superfamily. As to expression, expressed by the venom duct.

It localises to the secreted. In terms of biological role, alpha-conotoxins act on postsynaptic membranes, they bind to the nicotinic acetylcholine receptors (nAChR) and thus inhibit them. The protein is Alpha-conotoxin-like Lp1.6b of Conus leopardus (Leopard cone).